We begin with the raw amino-acid sequence, 392 residues long: Chaperone protein DnaJ 1 (392 aa).

One can recognise a J domain in the interval 4–67; the sequence is DYYEILGVSH…QKRAVFDRGG (64 aa). The CR-type zinc-finger motif lies at 134–216; that stretch reads GVTKSLEVDT…CSGEGRVRTT (83 aa). Cysteine 147, cysteine 150, cysteine 164, cysteine 167, cysteine 190, cysteine 193, cysteine 204, and cysteine 207 together coordinate Zn(2+). 4 CXXCXGXG motif repeats span residues 147 to 154, 164 to 171, 190 to 197, and 204 to 211; these read CPKCQGKG, CDTCQGRG, CPTCHGYG, and CQECSGEG. The segment at 367–392 is disordered; it reads ETNASASVEKSGGRGMFSRIKEAFGG.

This sequence belongs to the DnaJ family. In terms of assembly, homodimer. It depends on Zn(2+) as a cofactor.

The protein resides in the cytoplasm. Participates actively in the response to hyperosmotic and heat shock by preventing the aggregation of stress-denatured proteins and by disaggregating proteins, also in an autonomous, DnaK-independent fashion. Unfolded proteins bind initially to DnaJ; upon interaction with the DnaJ-bound protein, DnaK hydrolyzes its bound ATP, resulting in the formation of a stable complex. GrpE releases ADP from DnaK; ATP binding to DnaK triggers the release of the substrate protein, thus completing the reaction cycle. Several rounds of ATP-dependent interactions between DnaJ, DnaK and GrpE are required for fully efficient folding. Also involved, together with DnaK and GrpE, in the DNA replication of plasmids through activation of initiation proteins. The protein is Chaperone protein DnaJ 1 of Cutibacterium acnes (strain DSM 16379 / KPA171202) (Propionibacterium acnes).